The chain runs to 225 residues: ATP-dependent dethiobiotin synthetase BioD (225 aa).

Residue 13–18 coordinates ATP; it reads NVGKTL. Thr17 is a Mg(2+) binding site. The active site involves Lys38. Thr42 serves as a coordination point for substrate. Residues Asp55, 116–119, 176–177, and 205–207 each bind ATP; these read EGAG, NH, and PWL. Mg(2+)-binding residues include Asp55 and Glu116.

Belongs to the dethiobiotin synthetase family. As to quaternary structure, homodimer. The cofactor is Mg(2+).

It localises to the cytoplasm. The catalysed reaction is (7R,8S)-7,8-diammoniononanoate + CO2 + ATP = (4R,5S)-dethiobiotin + ADP + phosphate + 3 H(+). The protein operates within cofactor biosynthesis; biotin biosynthesis; biotin from 7,8-diaminononanoate: step 1/2. Functionally, catalyzes a mechanistically unusual reaction, the ATP-dependent insertion of CO2 between the N7 and N8 nitrogen atoms of 7,8-diaminopelargonic acid (DAPA, also called 7,8-diammoniononanoate) to form a ureido ring. This Baumannia cicadellinicola subsp. Homalodisca coagulata protein is ATP-dependent dethiobiotin synthetase BioD.